We begin with the raw amino-acid sequence, 466 residues long: MGGMTVLKLYNTLTREKTDFRPIDPKNVRMYVCGPTVYDFAHIGNARPIIVFDVLFRLLRHVYGTDHVTYARNITDVDDKINARALRDYPGLPLNEAIRHVTERTETRFLEDAALLGCLDPTVQPRATENIPGMIEIIETLIAKGHAYEAEGEVLFDTRSMAEYGQLSKRNLDEQQAGARVAVEAHKRNPGDFVLWKLSAGHEPGWESPWGRGRPGWHIECSAMSGRYLGEVFDIHGGGIDLIFPHHENEIAQSRCAHGTAVMANVWMHNGFLQVEGRKMSKSEGNFITIYDLLHTEKFGGRKWPGEVLRLAMLMTHYREPIDFSIKRLEEAEHLLSKWPVHGSASGEADPAVVAALTDDLNTVAAIQALHALAQKATADARHLGAFAASAALLGVEPKEIELDEAVVQEIDGRVRERLELLKSKNYAEADGIRADLLARGIQLKDGKDPETGERVTTWEVKRSQV.

Position 33 (Cys-33) interacts with Zn(2+). Residues 35 to 45 (PTVYDFAHIGN) carry the 'HIGH' region motif. Residues Cys-221, His-246, and Glu-250 each coordinate Zn(2+). The 'KMSKS' region motif lies at 279–283 (KMSKS). Lys-282 lines the ATP pocket.

This sequence belongs to the class-I aminoacyl-tRNA synthetase family. In terms of assembly, monomer. It depends on Zn(2+) as a cofactor.

It is found in the cytoplasm. The enzyme catalyses tRNA(Cys) + L-cysteine + ATP = L-cysteinyl-tRNA(Cys) + AMP + diphosphate. The sequence is that of Cysteine--tRNA ligase from Sinorhizobium medicae (strain WSM419) (Ensifer medicae).